The following is a 342-amino-acid chain: Phosphate acyltransferase (342 aa).

The protein belongs to the PlsX family. As to quaternary structure, homodimer. Probably interacts with PlsY.

The protein resides in the cytoplasm. It carries out the reaction a fatty acyl-[ACP] + phosphate = an acyl phosphate + holo-[ACP]. The protein operates within lipid metabolism; phospholipid metabolism. Functionally, catalyzes the reversible formation of acyl-phosphate (acyl-PO(4)) from acyl-[acyl-carrier-protein] (acyl-ACP). This enzyme utilizes acyl-ACP as fatty acyl donor, but not acyl-CoA. The polypeptide is Phosphate acyltransferase (Leuconostoc mesenteroides subsp. mesenteroides (strain ATCC 8293 / DSM 20343 / BCRC 11652 / CCM 1803 / JCM 6124 / NCDO 523 / NBRC 100496 / NCIMB 8023 / NCTC 12954 / NRRL B-1118 / 37Y)).